A 425-amino-acid chain; its full sequence is MPSYGNLGRLGGRHEYGVLVAMTSSAELDRVRWAHQLRSYRIASVLRIGVVGLMVAAMVVGTSRSEWPQQIVLIGVYAVAALWALLLAYSASRRFFALRRFRSMGRLEPFAFTAVDVLILTGFQLLSTDGIYPLLIMILLPVLVGLDVSTRRAAVVLACTLVGFAVAVLGDPVMLRAIGWPETIFRFALYAFLCATALMVVRIEERHTRSVAGLSALRAELLAQTMTASEVLQRRIAEAIHDGPLQDVLAARQELIELDAVTPGDERVGRALAGLQSASERLRQATFELHPAVLEQVGLGPAVKQLAASTAQRSGIKISTDIDYPIRSGIDPIVFGVVRELLSNVVRHSGATTASVRLGITDEKCVLDVADDGVGVTGDTMARRLGEGHIGLASHRARVDAAGGVLVFLATPRGTHVCVELPLKR.

6 helical membrane-spanning segments follow: residues 42-62, 71-91, 107-127, 130-150, 155-175, and 181-201; these read IASVLRIGVVGLMVAAMVVGT, IVLIGVYAVAALWALLLAYSA, LEPFAFTAVDVLILTGFQLLS, GIYPLLIMILLPVLVGLDVST, VVLACTLVGFAVAVLGDPVML, and PETIFRFALYAFLCATALMVV. The region spanning 224–425 is the Histidine kinase domain; sequence QTMTASEVLQ…HVCVELPLKR (202 aa). Phosphohistidine; by autocatalysis is present on H241.

In terms of processing, autophosphorylated on His-241.

Its subcellular location is the cell membrane. It catalyses the reaction ATP + protein L-histidine = ADP + protein N-phospho-L-histidine.. Member of the two-component regulatory system NarS/NarL involved in gene expression during aerobic nitrate metabolism. Plays therefore a crucial role in anaerobic survival of mycobacteria in host. Functions as a sensor protein kinase which is autophosphorylated at a histidine residue and transfers its phosphate group to the conserved aspartic acid residue in the regulatory domain of NarL. In turn, NarL binds to the upstream promoter regions of target genes to regulate their expression during aerobic nitrate metabolism. The chain is Sensor histidine kinase NarS from Mycobacterium tuberculosis (strain ATCC 25618 / H37Rv).